Here is a 181-residue protein sequence, read N- to C-terminus: CASP-like protein UU-1 (181 aa).

Residues 1–30 are Cytoplasmic-facing; that stretch reads MTMELESQEVVVETTTAAAAARAASAAHVR. A helical membrane pass occupies residues 31–51; that stretch reads TTVALRLLAFAASLAAAVVVA. The Extracellular portion of the chain corresponds to 52–65; sequence TNRQERWGITVTFK. The chain crosses the membrane as a helical span at residues 66–86; it reads MFAVWEAFVAINFACAAYALL. Residues 87 to 107 lie on the Cytoplasmic side of the membrane; it reads TAVFVKKLVSKHWLHHMDQFT. A helical membrane pass occupies residues 108-128; that stretch reads VNLQAASTAGAGAVGSVAMWG. The Extracellular portion of the chain corresponds to 129-147; that stretch reads NEPSGWYAVCRLYRLYCDR. Residues 148–168 form a helical membrane-spanning segment; it reads GAVSLALAFVAFVAFGVASSL. The Cytoplasmic segment spans residues 169 to 181; it reads SRYPRAPPPPAPR.

Belongs to the Casparian strip membrane proteins (CASP) family. Homodimer and heterodimers.

Its subcellular location is the cell membrane. The sequence is that of CASP-like protein UU-1 from Sorghum bicolor (Sorghum).